The chain runs to 295 residues: Fructose-bisphosphate aldolase class 1 (295 aa).

E176 (proton acceptor) is an active-site residue. K213 functions as the Schiff-base intermediate with dihydroxyacetone-P in the catalytic mechanism.

The protein belongs to the class I fructose-bisphosphate aldolase family.

The catalysed reaction is beta-D-fructose 1,6-bisphosphate = D-glyceraldehyde 3-phosphate + dihydroxyacetone phosphate. It participates in carbohydrate degradation; glycolysis; D-glyceraldehyde 3-phosphate and glycerone phosphate from D-glucose: step 4/4. The sequence is that of Fructose-bisphosphate aldolase class 1 from Clostridium acetobutylicum (strain ATCC 824 / DSM 792 / JCM 1419 / IAM 19013 / LMG 5710 / NBRC 13948 / NRRL B-527 / VKM B-1787 / 2291 / W).